The following is a 130-amino-acid chain: Small ribosomal subunit protein uS8 (130 aa).

The protein belongs to the universal ribosomal protein uS8 family. In terms of assembly, part of the 30S ribosomal subunit. Contacts proteins S5 and S12.

Functionally, one of the primary rRNA binding proteins, it binds directly to 16S rRNA central domain where it helps coordinate assembly of the platform of the 30S subunit. The chain is Small ribosomal subunit protein uS8 from Buchnera aphidicola subsp. Cinara cedri (strain Cc).